Here is a 392-residue protein sequence, read N- to C-terminus: Formate-dependent phosphoribosylglycinamide formyltransferase (392 aa).

N(1)-(5-phospho-beta-D-ribosyl)glycinamide is bound by residues 22–23 (EL) and glutamate 82. ATP contacts are provided by residues arginine 114, lysine 155, 160 to 165 (SSGKGQ), 195 to 198 (EGVV), and glutamate 203. Residues 119 to 308 (RLAAEELWVP…EFALHVRAFL (190 aa)) enclose the ATP-grasp domain. Mg(2+) contacts are provided by glutamate 267 and glutamate 279. N(1)-(5-phospho-beta-D-ribosyl)glycinamide contacts are provided by residues aspartate 286, lysine 355, and 362–363 (RR).

Belongs to the PurK/PurT family. Homodimer.

The enzyme catalyses N(1)-(5-phospho-beta-D-ribosyl)glycinamide + formate + ATP = N(2)-formyl-N(1)-(5-phospho-beta-D-ribosyl)glycinamide + ADP + phosphate + H(+). It participates in purine metabolism; IMP biosynthesis via de novo pathway; N(2)-formyl-N(1)-(5-phospho-D-ribosyl)glycinamide from N(1)-(5-phospho-D-ribosyl)glycinamide (formate route): step 1/1. In terms of biological role, involved in the de novo purine biosynthesis. Catalyzes the transfer of formate to 5-phospho-ribosyl-glycinamide (GAR), producing 5-phospho-ribosyl-N-formylglycinamide (FGAR). Formate is provided by PurU via hydrolysis of 10-formyl-tetrahydrofolate. The sequence is that of Formate-dependent phosphoribosylglycinamide formyltransferase from Erwinia tasmaniensis (strain DSM 17950 / CFBP 7177 / CIP 109463 / NCPPB 4357 / Et1/99).